Consider the following 101-residue polypeptide: MADFLKGLPVYNESNFSRFHADSVCKASNRRPSVYLPTREYPSDQIIVTEKTNILLRYLHQQWDKKNAAKKRDQDQLEIGETSAPPRKIARTDSQEMNEDT.

The tract at residues 67–101 is disordered; the sequence is NAAKKRDQDQLEIGETSAPPRKIARTDSQEMNEDT.

Belongs to the DDA1 family. In terms of assembly, component of numerous DCX (DDB1-CUL4-X-box) E3 ubiquitin-protein ligase complexes which consist of a core of DDB1, cullin-4 (CUL4A or CUL4B), DDA1 and RBX1.

Its pathway is protein modification; protein ubiquitination. Functionally, functions as a component of numerous distinct DCX (DDB1-CUL4-X-box) E3 ubiquitin-protein ligase complexes which mediate the ubiquitination and subsequent proteasomal degradation of target proteins. In the DCX complexes, acts as a scaffolding subunit required to stabilize the complex. The protein is DET1- and DDB1-associated protein 1 of Xenopus laevis (African clawed frog).